Here is a 294-residue protein sequence, read N- to C-terminus: Cytidine deaminase (294 aa).

CMP/dCMP-type deaminase domains are found at residues 48–168 and 186–294; these read DEDA…FGPK and LTGD…VLLA. 89 to 91 contacts substrate; it reads NME. Histidine 102 is a Zn(2+) binding site. Glutamate 104 acts as the Proton donor in catalysis. Zn(2+)-binding residues include cysteine 129 and cysteine 132.

It belongs to the cytidine and deoxycytidylate deaminase family. Homodimer. Zn(2+) is required as a cofactor.

It carries out the reaction cytidine + H2O + H(+) = uridine + NH4(+). It catalyses the reaction 2'-deoxycytidine + H2O + H(+) = 2'-deoxyuridine + NH4(+). In terms of biological role, this enzyme scavenges exogenous and endogenous cytidine and 2'-deoxycytidine for UMP synthesis. The chain is Cytidine deaminase from Escherichia coli (strain K12).